Reading from the N-terminus, the 340-residue chain is uncharacterized protein (340 aa).

This is an uncharacterized protein from Enterobacteria phage T4 (Bacteriophage T4).